A 136-amino-acid chain; its full sequence is Ubiquinol-cytochrome-c reductase complex assembly factor 2 (136 aa).

The transit peptide at 1-13 (MAALRYRRFLKLC) directs the protein to the mitochondrion.

Interacts with UQCC1.

It localises to the mitochondrion matrix. Its subcellular location is the mitochondrion nucleoid. The protein resides in the mitochondrion. The protein localises to the mitochondrion intermembrane space. It is found in the mitochondrion inner membrane. In terms of biological role, required for the assembly of the ubiquinol-cytochrome c reductase complex (mitochondrial respiratory chain complex III or cytochrome b-c1 complex). Plays a role in the modulation of respiratory chain activities such as oxygen consumption and ATP production and via its modulation of the respiratory chain activity can regulate skeletal muscle differentiation and insulin secretion by pancreatic beta-cells. Involved in cytochrome b translation and/or stability. The sequence is that of Ubiquinol-cytochrome-c reductase complex assembly factor 2 (Uqcc2) from Rattus norvegicus (Rat).